The sequence spans 1487 residues: MALEIDAKNAAAAATGDGGAPGKAKAKENKSNSNSNNNNVPAAGEKNLVNGSSAATKKKGKKNRNKSPPQQDVSAAGAALSNGHAEKASVNGDAADANANVLDKKVEEEGATAAAGATEAAAEVGSSGDGGAATEGEAAASGEDVDLDALHDVGITVNISSPGADVLSVQLSSMELVQEIHQLLMDREETCHRTCFSLQLDNVTLDNFAELKTIEGLEQGSTIRVVEEPYTMREARIHVRHVRDLLKNLDPADAYNGIDCTSLTYLITITQGDLLDKKRTRPDSVDCTPPDYVIPGVREPPLLPLHPNIKNAKGPQALKVLTTSAWNPPPGPRKLHGDLMYLYVVTMEDKRFHISACSKGFYINQSTDECFNPKPDNPSHLSHSLIDLLSHISPSFRRAFQTIQKRRTMRHAFERVATPYQVYQWSAPQLEHTVDAIRAEDAFSSKLGYEEHIPGQTRDWNEELQTTRELPRKTLPERLLRERAIFKVHGDFVTAATRGAMAVIDGNVLAINPGEDPKMQMFIWNNIFFSLGFDVRDHYKELGGDHAAFVAPRYDLHGVRVYNAVDIEGLYTLGTVVIDYRGYRVTAQSIIPGILEREQEQSVVYGSIDFGKTVLSHPKYLELLRLAGKHLKILPHSVLNERDEPVELCSSVECKGIIGNDGRHYILDLLRTFPPDVNFLKLQDVQLSKELTDMGFPIEHRHKLCCLRQELLEAFIEDRYVTFIRIAAVHLQQLNAKKQAEKELPSITEKQEEPEKEQAEKSSAEQPEKEKEKEKDKEDEQKESKPSPTETKSAEAMVNAIREAQSNVAVSNEVQAAEVVKRACAAVGSLKEKEFDFRFNPDVFSPGIRHVDSPESGAQSLAKQKRLVQDAAEFLVLKQIPAFIKEHMAHSSPPIDGQSLTESLHSHGINVRYLGKVIKMLSQMPRMDYLHRIAILELIVRATKHIYYTYMQSTEPLHLSAAISHFLNCLLTTGPVNPAVSSEEVHKKQSRNNGGKHNKHNKSNKSGKPQSTSAAAATQNGHSSTAANGSANSAANTASTSGNSNYDWTLVTPRSLWQQIRKEIKSYWNWELDCDSIESACAKYGLLRISLLRAFCLKVGIQVLLREYNFESKHKPTFGDDDIVNVFPVVKHISPRATDAYNFYTTGQAKIQQGLLKEGYELISEALNLLNNVFGAMHQENGSCLRMLARLSYLLGDAQDALAIQQRAVIMSERVNGIDHPSTILEYTHLSLYSFANGHVGMSLKLLYRARYLLVLVCGEDHPEVALIDSNISLILHALGEYELSLRFIEHALKLNLKYFGNKAMHVAVSYHLMARIQSCMGDFRSALNNEKETYSIYKSQLGEKHDKTRESAECLRLLTHEAVALQRKMNDIYSNGKLTSDLPPIHITPPSMGSVLEMLNTINGILFVHISQKDIVKVRSQIEKHLKTSDESGPNDDNEVTAALKTFVAAINYNDTEQPKEGSEVEGATATQLTNGSEDSTTTVSS.

Disordered stretches follow at residues 1–94 and 110–140; these read MALE…NGDA and GATA…EAAA. Residues 56–65 are compositionally biased toward basic residues; that stretch reads TKKKGKKNRN. Over residues 111–126 the composition is skewed to low complexity; sequence ATAAAGATEAAAEVGS. Ser284 is modified (phosphoserine). In terms of domain architecture, Clu spans 438–680; sequence RAEDAFSSKL…RTFPPDVNFL (243 aa). Basic and acidic residues predominate over residues 739-785; sequence QAEKELPSITEKQEEPEKEQAEKSSAEQPEKEKEKEKDKEDEQKESK. Disordered stretches follow at residues 739 to 794 and 980 to 1040; these read QAEK…TKSA and VSSE…TAST. Residues 988 to 1005 are compositionally biased toward basic residues; it reads KQSRNNGGKHNKHNKSNK. Residues 1009–1019 are compositionally biased toward polar residues; it reads PQSTSAAAATQ. Positions 1020 to 1040 are enriched in low complexity; that stretch reads NGHSSTAANGSANSAANTAST. TPR repeat units lie at residues 1140–1173, 1266–1299, and 1301–1334; these read AYNF…LNNV, ALID…NLKY, and GNKA…EKET. The disordered stretch occupies residues 1456-1487; that stretch reads DTEQPKEGSEVEGATATQLTNGSEDSTTTVSS. Residues 1470-1487 show a composition bias toward polar residues; that stretch reads TATQLTNGSEDSTTTVSS.

It belongs to the CLU family.

The protein localises to the cytoplasm. Its function is as follows. mRNA-binding protein involved in proper cytoplasmic distribution of mitochondria. This Drosophila mojavensis (Fruit fly) protein is Protein clueless.